The chain runs to 390 residues: ATP phosphoribosyltransferase regulatory subunit (390 aa).

The protein belongs to the class-II aminoacyl-tRNA synthetase family. HisZ subfamily. As to quaternary structure, heteromultimer composed of HisG and HisZ subunits.

The protein resides in the cytoplasm. It participates in amino-acid biosynthesis; L-histidine biosynthesis; L-histidine from 5-phospho-alpha-D-ribose 1-diphosphate: step 1/9. Functionally, required for the first step of histidine biosynthesis. May allow the feedback regulation of ATP phosphoribosyltransferase activity by histidine. The chain is ATP phosphoribosyltransferase regulatory subunit from Bacillus velezensis (strain DSM 23117 / BGSC 10A6 / LMG 26770 / FZB42) (Bacillus amyloliquefaciens subsp. plantarum).